Reading from the N-terminus, the 102-residue chain is Feather keratin (102 aa).

Residue Ser-1 is modified to N-acetylserine.

Belongs to the avian keratin family. In terms of assembly, the avian keratins (F-ker, S-ker, C-ker and B-ker) are a complex mixture of very similar polypeptides.

This is Feather keratin from Dromaius novaehollandiae (Emu).